The sequence spans 124 residues: Glutaredoxin-2 (124 aa).

A disulfide bridge links Cys-13 with Cys-16.

This sequence belongs to the glutaredoxin family. As to quaternary structure, homodimer.

It localises to the host cytoplasm. In terms of biological role, glutaredoxin necessary for virion morphogenesis and virus replication. Functions as a thiol-disulfide transfer protein between membrane-associated OPG128 and substrates OPG095 or OPG053. The complete pathway for formation of disulfide bonds in intracellular virion membrane proteins sequentially involves oxidation of OPG072, OPG128 and OPG088. Exhibit thioltransferase and dehydroascorbate reductase activities in vitro. The protein is Glutaredoxin-2 (OPG088) of Homo sapiens (Human).